The primary structure comprises 228 residues: Phosphoribosylformylglycinamidine synthase subunit PurQ (228 aa).

The Glutamine amidotransferase type-1 domain occupies 3–226 (FAVIVFPGSN…IANWRDSYAI (224 aa)). The active-site Nucleophile is the Cys87. Active-site residues include His195 and Glu197.

As to quaternary structure, part of the FGAM synthase complex composed of 1 PurL, 1 PurQ and 2 PurS subunits.

The protein resides in the cytoplasm. The enzyme catalyses N(2)-formyl-N(1)-(5-phospho-beta-D-ribosyl)glycinamide + L-glutamine + ATP + H2O = 2-formamido-N(1)-(5-O-phospho-beta-D-ribosyl)acetamidine + L-glutamate + ADP + phosphate + H(+). The catalysed reaction is L-glutamine + H2O = L-glutamate + NH4(+). The protein operates within purine metabolism; IMP biosynthesis via de novo pathway; 5-amino-1-(5-phospho-D-ribosyl)imidazole from N(2)-formyl-N(1)-(5-phospho-D-ribosyl)glycinamide: step 1/2. Its function is as follows. Part of the phosphoribosylformylglycinamidine synthase complex involved in the purines biosynthetic pathway. Catalyzes the ATP-dependent conversion of formylglycinamide ribonucleotide (FGAR) and glutamine to yield formylglycinamidine ribonucleotide (FGAM) and glutamate. The FGAM synthase complex is composed of three subunits. PurQ produces an ammonia molecule by converting glutamine to glutamate. PurL transfers the ammonia molecule to FGAR to form FGAM in an ATP-dependent manner. PurS interacts with PurQ and PurL and is thought to assist in the transfer of the ammonia molecule from PurQ to PurL. The sequence is that of Phosphoribosylformylglycinamidine synthase subunit PurQ from Oceanobacillus iheyensis (strain DSM 14371 / CIP 107618 / JCM 11309 / KCTC 3954 / HTE831).